We begin with the raw amino-acid sequence, 439 residues long: Deacetylvindoline O-acetyltransferase (439 aa).

His-158 functions as the Proton acceptor in the catalytic mechanism. Positions 317–344 form a coiled coil; that stretch reads TKLVINELRKEKQKIKNLSREKLTYVAQ. Catalysis depends on Asp-380, which acts as the Proton acceptor.

The protein belongs to the plant acyltransferase family. Monomer. Predominantly expressed in young leaves of mature plants. Low expression in stems and flowers and not detected in roots. Confined to the laticifer and idioblast cells of leaves, stems, and flower buds.

Its subcellular location is the cytoplasm. It is found in the nucleus. The catalysed reaction is 4-O-deacetylvindoline + acetyl-CoA = vindoline + CoA. It functions in the pathway alkaloid biosynthesis; vindoline biosynthesis. Involved in the biosynthesis of vindoline, a precursor of vinblastine and vincristine. This is Deacetylvindoline O-acetyltransferase from Catharanthus roseus (Madagascar periwinkle).